We begin with the raw amino-acid sequence, 444 residues long: Cortexillin-1 (444 aa).

An actin-binding region spans residues 1 to 227 (MAGKDWEIVQ…VLYTSLFFHA (227 aa)). 2 consecutive Calponin-homology (CH) domains span residues 8–115 (IVQE…RKYR) and 124–229 (KSSE…HAYR). Coiled-coil stretches lie at residues 227 to 352 (AYRA…TRIR) and 410 to 434 (LATK…DLKA).

The protein belongs to the cortexillin family. In terms of assembly, homodimer; parallel.

The protein localises to the cytoplasm. Its subcellular location is the cytoskeleton. In terms of biological role, actin-bundling protein. When linked to F-actin the actin filaments form preferentially anti-parallel bundles that associate into meshworks. Plays a major role in cytokinesis. Negatively regulates cortical localization of rapgap1. In Dictyostelium discoideum (Social amoeba), this protein is Cortexillin-1 (ctxA).